An 892-amino-acid chain; its full sequence is Alpha-actinin-1 (892 aa).

Methionine 1 is subject to N-acetylmethionine. Residues 1–247 are actin-binding; sequence MDHYDSQQTN…IMTYVSSFYH (247 aa). Position 6 is a phosphoserine (serine 6). Residue tyrosine 12 is modified to Phosphotyrosine; by FAK1. Calponin-homology (CH) domains are found at residues 31 to 135 and 144 to 250; these read KQQR…LRFA and TSAK…HAFS. N6-acetyllysine occurs at positions 95 and 195. Spectrin repeat units lie at residues 274–384, 394–499, 509–620, and 630–733; these read QLME…WLLN, HLAE…ALER, QLYL…ALTE, and RLRK…EVEN. The tract at residues 274 to 733 is interaction with DDN; sequence QLMEDYEKLA…IARTINEVEN (460 aa). Phosphoserine is present on serine 471. At lysine 676 the chain carries N6-acetyllysine. Serine 677 bears the Phosphoserine mark. EF-hand domains are found at residues 746–781 and 787–822; these read EQMN…LGYD and QGEA…ETAD. The Ca(2+) site is built by aspartate 759, aspartate 761, serine 763, threonine 765, and glutamate 770. At serine 890 the chain carries Phosphoserine.

This sequence belongs to the alpha-actinin family. As to quaternary structure, homodimer; antiparallel. Interacts with MYOZ2, TTID and LPP. Interacts with DDN. Interacts with PSD. Interacts with MICALL2. Interacts with DNM2 and CTTN. Interacts with PDLIM1. Interacts with PDLIM2. Interacts with PDLIM4 (via PDZ domain). Interacts with IGSF8.

Its subcellular location is the cytoplasm. It is found in the cytoskeleton. The protein localises to the myofibril. The protein resides in the sarcomere. It localises to the z line. Its subcellular location is the cell membrane. It is found in the cell junction. The protein localises to the cell projection. The protein resides in the ruffle. Its function is as follows. F-actin cross-linking protein which is thought to anchor actin to a variety of intracellular structures. Association with IGSF8 regulates the immune synapse formation and is required for efficient T-cell activation. In Mus musculus (Mouse), this protein is Alpha-actinin-1 (Actn1).